Here is a 379-residue protein sequence, read N- to C-terminus: ATP phosphoribosyltransferase regulatory subunit (379 aa).

Belongs to the class-II aminoacyl-tRNA synthetase family. HisZ subfamily. In terms of assembly, heteromultimer composed of HisG and HisZ subunits.

The protein resides in the cytoplasm. It functions in the pathway amino-acid biosynthesis; L-histidine biosynthesis; L-histidine from 5-phospho-alpha-D-ribose 1-diphosphate: step 1/9. In terms of biological role, required for the first step of histidine biosynthesis. May allow the feedback regulation of ATP phosphoribosyltransferase activity by histidine. This chain is ATP phosphoribosyltransferase regulatory subunit, found in Gluconobacter oxydans (strain 621H) (Gluconobacter suboxydans).